Here is an 84-residue protein sequence, read N- to C-terminus: MLALISILLLFYISQNNLITLLIAIEILLLTVTVKLIYMGSVYDDIYGTIFSIVIIILAGAESAIGLSILVSYYRLRGKVGHTI.

2 helical membrane passes run 7 to 29 (ILLLFYISQNNLITLLIAIEILL) and 50 to 70 (IFSIVIIILAGAESAIGLSIL).

The protein belongs to the complex I subunit 4L family.

The protein resides in the mitochondrion membrane. The catalysed reaction is a ubiquinone + NADH + 5 H(+)(in) = a ubiquinol + NAD(+) + 4 H(+)(out). Functionally, core subunit of the mitochondrial membrane respiratory chain NADH dehydrogenase (Complex I) that is believed to belong to the minimal assembly required for catalysis. Complex I functions in the transfer of electrons from NADH to the respiratory chain. The immediate electron acceptor for the enzyme is believed to be ubiquinone. The polypeptide is NADH-ubiquinone oxidoreductase chain 4L (ND4L) (Candida parapsilosis (Yeast)).